The primary structure comprises 361 residues: 3-dehydroquinate synthase (361 aa).

Residues 72–77 (SGEKEK), 130–131 (TT), Lys142, and Lys151 contribute to the NAD(+) site. 3 residues coordinate Zn(2+): Glu184, His247, and His264.

Belongs to the sugar phosphate cyclases superfamily. Dehydroquinate synthase family. The cofactor is Co(2+). Zn(2+) serves as cofactor. It depends on NAD(+) as a cofactor.

It is found in the cytoplasm. The catalysed reaction is 7-phospho-2-dehydro-3-deoxy-D-arabino-heptonate = 3-dehydroquinate + phosphate. It functions in the pathway metabolic intermediate biosynthesis; chorismate biosynthesis; chorismate from D-erythrose 4-phosphate and phosphoenolpyruvate: step 2/7. Catalyzes the conversion of 3-deoxy-D-arabino-heptulosonate 7-phosphate (DAHP) to dehydroquinate (DHQ). The protein is 3-dehydroquinate synthase of Bacillus cereus (strain ZK / E33L).